The sequence spans 321 residues: uncharacterized protein (321 aa).

This is an uncharacterized protein from Aquifex aeolicus (strain VF5).